The following is a 263-amino-acid chain: Small ribosomal subunit protein eS4 (263 aa).

The S4 RNA-binding domain maps to 42 to 104; the sequence is LPLVIFLRNR…TNELFRLIYD (63 aa).

Belongs to the eukaryotic ribosomal protein eS4 family.

This chain is Small ribosomal subunit protein eS4 (RpS4), found in Spodoptera frugiperda (Fall armyworm).